A 251-amino-acid chain; its full sequence is NADPH-dependent oxidoreductase (251 aa).

This sequence belongs to the flavin oxidoreductase frp family. Requires FMN as cofactor.

Reduces FMN, organic nitro compounds and disulfide DTNB. Involved in maintenance of the cellular redox state and the disulfide stress response. In Staphylococcus aureus (strain MRSA252), this protein is NADPH-dependent oxidoreductase (nfrA).